The chain runs to 470 residues: Histone deacetylase HOS1 (470 aa).

Residues 47-392 (LTFPYARKDD…YTYLTWCVTK (346 aa)) form a histone deacetylase region. Ser-110 bears the Phosphoserine mark. His-211 is a catalytic residue.

This sequence belongs to the histone deacetylase family. HD type 1 subfamily.

It is found in the nucleus. The catalysed reaction is N(6)-acetyl-L-lysyl-[histone] + H2O = L-lysyl-[histone] + acetate. Responsible for the deacetylation of lysine residues on the N-terminal part of the core histones (H2A, H2B, H3 and H4). Histone deacetylation plays an important role in transcriptional regulation, cell cycle progression and developmental events. Histone deacetylases act via the formation of large multiprotein complexes. This Saccharomyces cerevisiae (strain ATCC 204508 / S288c) (Baker's yeast) protein is Histone deacetylase HOS1 (HOS1).